The primary structure comprises 302 residues: Methionyl-tRNA formyltransferase (302 aa).

Position 108-111 (108-111 (SLLP)) interacts with (6S)-5,6,7,8-tetrahydrofolate. A compositionally biased stretch (basic and acidic residues) spans 276–288 (REGKRPMEPEEFL). The disordered stretch occupies residues 276–302 (REGKRPMEPEEFLRGFPLPEGSRAHTA).

This sequence belongs to the Fmt family.

It carries out the reaction L-methionyl-tRNA(fMet) + (6R)-10-formyltetrahydrofolate = N-formyl-L-methionyl-tRNA(fMet) + (6S)-5,6,7,8-tetrahydrofolate + H(+). Functionally, attaches a formyl group to the free amino group of methionyl-tRNA(fMet). The formyl group appears to play a dual role in the initiator identity of N-formylmethionyl-tRNA by promoting its recognition by IF2 and preventing the misappropriation of this tRNA by the elongation apparatus. The sequence is that of Methionyl-tRNA formyltransferase from Cereibacter sphaeroides (strain ATCC 17029 / ATH 2.4.9) (Rhodobacter sphaeroides).